The primary structure comprises 301 residues: tRNA uridine(34) hydroxylase (301 aa).

Residues 121–215 (RSDDVVLIDT…YLEEVPAENS (95 aa)) enclose the Rhodanese domain. The Cysteine persulfide intermediate role is filled by Cys-175.

The protein belongs to the TrhO family.

The catalysed reaction is uridine(34) in tRNA + AH2 + O2 = 5-hydroxyuridine(34) in tRNA + A + H2O. Functionally, catalyzes oxygen-dependent 5-hydroxyuridine (ho5U) modification at position 34 in tRNAs. The protein is tRNA uridine(34) hydroxylase of Ruegeria pomeroyi (strain ATCC 700808 / DSM 15171 / DSS-3) (Silicibacter pomeroyi).